We begin with the raw amino-acid sequence, 214 residues long: MNNETTTLISLKEAMKRVDHKLQALETQFKELDFTKDNLMQKFEHHSKALASQAAQDEMWTAVRALQLTSMELNILYSYVIEVLICLHTRVLEKLPDLVRGLPTLASVLRRKVKNKRVRVVWESILEECGLQEGDITALCTFFIARGNKAEHYTAKVRQMYIRDVTFLITNMVKNQALQDSLLRAVQVIEKGKAVRTPEKQKSSLEELIPSVKN.

Positions 6 to 42 (TTLISLKEAMKRVDHKLQALETQFKELDFTKDNLMQK) form a coiled coil. Residues 65–81 (ALQLTSMELNILYSYVI) traverse the membrane as a helical segment.

The protein resides in the membrane. The chain is Single-pass membrane and coiled-coil domain-containing protein 1 (SMCO1) from Homo sapiens (Human).